Consider the following 663-residue polypeptide: NAD(P)H-quinone oxidoreductase subunit 5, chloroplastic (663 aa).

The next 16 membrane-spanning stretches (helical) occupy residues 11 to 31 (WLIP…LISF), 41 to 61 (LYGL…MNLL), 89 to 109 (FFID…AVLV), 126 to 146 (FFAY…SPNL), 149 to 169 (IYIF…FWFT), 189 to 209 (FCLL…DFIT), 224 to 244 (HLYF…AKSA), 260 to 280 (TPIS…FLVA), 292 to 312 (IMNL…TIAL), 329 to 349 (LGYM…FHLV), 398 to 418 (FTFL…CFWS), 436 to 456 (IAWI…LLAF), 482 to 502 (LYML…GFIS), 528 to 548 (ILLN…AYSI), 607 to 627 (WLFD…GQSL), and 635 to 655 (VSSY…FLPL).

This sequence belongs to the complex I subunit 5 family. In terms of assembly, NDH is composed of at least 16 different subunits, 5 of which are encoded in the nucleus.

It localises to the plastid. Its subcellular location is the chloroplast thylakoid membrane. It catalyses the reaction a plastoquinone + NADH + (n+1) H(+)(in) = a plastoquinol + NAD(+) + n H(+)(out). The enzyme catalyses a plastoquinone + NADPH + (n+1) H(+)(in) = a plastoquinol + NADP(+) + n H(+)(out). Its function is as follows. NDH shuttles electrons from NAD(P)H:plastoquinone, via FMN and iron-sulfur (Fe-S) centers, to quinones in the photosynthetic chain and possibly in a chloroplast respiratory chain. The immediate electron acceptor for the enzyme in this species is believed to be plastoquinone. Couples the redox reaction to proton translocation, and thus conserves the redox energy in a proton gradient. The chain is NAD(P)H-quinone oxidoreductase subunit 5, chloroplastic (ndhF) from Chara vulgaris (Common stonewort).